Reading from the N-terminus, the 203-residue chain is Sperm-specific protein PHI-2B/PHI-3 (203 aa).

Basic residues predominate over residues 1 to 35 (MPSPSRKSRSRSRSRSKSPKRSPAKKARKTPKKPR). Disordered stretches follow at residues 1–46 (MPSP…PSTL) and 104–203 (KTSA…KSKK). The H15 domain occupies 41-120 (KKPSTLSMIV…GATGSFRVGK (80 aa)). 2 stretches are compositionally biased toward basic residues: residues 126–140 (KKAK…KSSK) and 147–203 (KAKK…KSKK).

PL-II* and PL-IV are produced by post-translational cleavage of a common precursor. In terms of tissue distribution, sperm.

The protein localises to the nucleus. The protein resides in the chromosome. Functionally, linker histones are implicated in chromatin remodeling and/or transcriptional regulation during spermiogenesis, the process of spermatid maturation into spermatozoa. Protamines substitute for histones in the chromatin of sperm during the haploid phase of spermatogenesis. They compact sperm DNA into a highly condensed, stable and inactive complex. This chain is Sperm-specific protein PHI-2B/PHI-3, found in Mytilus trossulus (Blue mussel).